An 883-amino-acid polypeptide reads, in one-letter code: Alanine--tRNA ligase (883 aa).

Positions 560, 564, 665, and 669 each coordinate Zn(2+).

The protein belongs to the class-II aminoacyl-tRNA synthetase family. It depends on Zn(2+) as a cofactor.

Its subcellular location is the cytoplasm. The catalysed reaction is tRNA(Ala) + L-alanine + ATP = L-alanyl-tRNA(Ala) + AMP + diphosphate. Catalyzes the attachment of alanine to tRNA(Ala) in a two-step reaction: alanine is first activated by ATP to form Ala-AMP and then transferred to the acceptor end of tRNA(Ala). Also edits incorrectly charged Ser-tRNA(Ala) and Gly-tRNA(Ala) via its editing domain. The chain is Alanine--tRNA ligase from Mesomycoplasma hyopneumoniae (strain 232) (Mycoplasma hyopneumoniae).